Consider the following 352-residue polypeptide: Protein Wnt-2 (352 aa).

A signal peptide spans methionine 1–serine 23. 11 disulfide bridges follow: cysteine 65-cysteine 76, cysteine 115-cysteine 123, cysteine 125-cysteine 148, cysteine 196-cysteine 210, cysteine 198-cysteine 205, cysteine 281-cysteine 312, cysteine 297-cysteine 307, cysteine 311-cysteine 351, cysteine 327-cysteine 342, cysteine 329-cysteine 339, and cysteine 334-cysteine 335. N-linked (GlcNAc...) asparagine glycans are attached at residues asparagine 75 and asparagine 119. Serine 202 carries the O-palmitoleoyl serine; by PORCN lipid modification.

It belongs to the Wnt family. Palmitoleoylated by porcupine. The lipid group functions as a sorting signal, targeting the ligand to polarized vesicles that transport Wnt2 to unique sites at the cell surface. Depalmitoleoylated by notum, leading to inhibit Wnt signaling pathway. In terms of tissue distribution, dynamic expression pattern during embryogenesis. Expression is predominantly segmented, with expression also seen in the limb primordia and presumptive gonads. In embryonic tracheal cells, expression is close to and dorsal to the tracheal placode.

The protein resides in the secreted. It localises to the extracellular space. It is found in the extracellular matrix. Its function is as follows. Binds as a ligand to a family of frizzled seven-transmembrane receptors and acts through a cascade of genes on the nucleus. Segment polarity protein. May function in gonadogenesis and limb development. Wg and Wnt2 have a role in the developing trachea and together are responsible for all dorsal trunk formation. The sequence is that of Protein Wnt-2 (Wnt2) from Drosophila melanogaster (Fruit fly).